A 326-amino-acid polypeptide reads, in one-letter code: Melanocortin receptor 4 (326 aa).

Residues 1–14 are compositionally biased toward basic residues; that stretch reads MNTSHHHGLHHSFR. The disordered stretch occupies residues 1–31; it reads MNTSHHHGLHHSFRNHSQGALPVGKPSHGDR. Residues 1-46 are Extracellular-facing; the sequence is MNTSHHHGLHHSFRNHSQGALPVGKPSHGDRGSASGCYEQLLISTE. Asn-2 and Asn-15 each carry an N-linked (GlcNAc...) asparagine glycan. Residues 47–67 traverse the membrane as a helical segment; it reads IFLTLGLVSLLENILVIAAIV. The Cytoplasmic segment spans residues 68–71; that stretch reads KNKN. A helical transmembrane segment spans residues 72 to 92; that stretch reads LHSPMYFFICSLAVADLLVSV. The Extracellular portion of the chain corresponds to 93-121; sequence SNASETVVMALITGGNLTNRESIIKNMDN. N-linked (GlcNAc...) asparagine glycans are attached at residues Asn-94 and Asn-108. Residues 122-142 traverse the membrane as a helical segment; the sequence is VFDSMICSSLLASIWSLLAIA. Residues 143–163 are Cytoplasmic-facing; that stretch reads VDRYITIFYALRYHNIMTQRR. The chain crosses the membrane as a helical span at residues 164-184; that stretch reads AGTIITCIWTFCTVSGVLFIV. The Extracellular portion of the chain corresponds to 185 to 190; it reads YSESTT. Residues 191-211 form a helical membrane-spanning segment; that stretch reads VLICLISMFFTMLALMASLYV. The Cytoplasmic segment spans residues 212–246; sequence HMFLLARLHMKRIAALPGNGPIWQAANMKGAITIT. Residues 247–267 traverse the membrane as a helical segment; sequence ILLGVFVVCWAPFFLHLILMI. Over 268–281 the chain is Extracellular; that stretch reads SCPRNPYCVCFMSH. Residues 282–302 traverse the membrane as a helical segment; it reads FNMYLILIMCNSVIDPLIYAF. Over 303-326 the chain is Cytoplasmic; sequence RSQEMRKTFKEICCCWYGLASLCV. Cys-316 carries S-palmitoyl cysteine lipidation.

This sequence belongs to the G-protein coupled receptor 1 family. As to quaternary structure, homodimer; disulfide-linked, also forms higher order oligomers. Interacts with mrap2a; decreasing ligand-sensitivity. Interacts with mrap2b; increasing ligand-sensitivity and generation of cAMP.

It is found in the cell membrane. Functionally, receptor specific to the heptapeptide core common to adrenocorticotropic hormone and alpha-, beta-, and gamma-MSH. Plays a central role in energy homeostasis and somatic growth. This receptor is mediated by G proteins that stimulate adenylate cyclase (cAMP). This is Melanocortin receptor 4 (mc4r) from Danio rerio (Zebrafish).